Reading from the N-terminus, the 556-residue chain is Dihydroxy-acid dehydratase (556 aa).

Residue D78 coordinates Mg(2+). C119 lines the [2Fe-2S] cluster pocket. Mg(2+) is bound by residues D120 and K121. K121 is modified (N6-carboxylysine). C191 is a binding site for [2Fe-2S] cluster. Residue E442 participates in Mg(2+) binding. The active-site Proton acceptor is S468.

The protein belongs to the IlvD/Edd family. Homodimer. It depends on [2Fe-2S] cluster as a cofactor. The cofactor is Mg(2+).

It catalyses the reaction (2R)-2,3-dihydroxy-3-methylbutanoate = 3-methyl-2-oxobutanoate + H2O. It carries out the reaction (2R,3R)-2,3-dihydroxy-3-methylpentanoate = (S)-3-methyl-2-oxopentanoate + H2O. Its pathway is amino-acid biosynthesis; L-isoleucine biosynthesis; L-isoleucine from 2-oxobutanoate: step 3/4. The protein operates within amino-acid biosynthesis; L-valine biosynthesis; L-valine from pyruvate: step 3/4. Functions in the biosynthesis of branched-chain amino acids. Catalyzes the dehydration of (2R,3R)-2,3-dihydroxy-3-methylpentanoate (2,3-dihydroxy-3-methylvalerate) into 2-oxo-3-methylpentanoate (2-oxo-3-methylvalerate) and of (2R)-2,3-dihydroxy-3-methylbutanoate (2,3-dihydroxyisovalerate) into 2-oxo-3-methylbutanoate (2-oxoisovalerate), the penultimate precursor to L-isoleucine and L-valine, respectively. The sequence is that of Dihydroxy-acid dehydratase from Clostridium kluyveri (strain NBRC 12016).